The chain runs to 844 residues: Patched-related protein 9 (844 aa).

The 158-residue stretch at 264–421 (LIPWMPWTSL…VTFFNAVMSL (158 aa)) folds into the SSD domain.

The protein belongs to the patched family.

The sequence is that of Patched-related protein 9 (ptr-9) from Caenorhabditis elegans.